A 724-amino-acid chain; its full sequence is Catalase-peroxidase (724 aa).

Residues 98–226 (WHSAGTYRIA…LAAVMMGLIY (129 aa)) constitute a cross-link (tryptophyl-tyrosyl-methioninium (Trp-Tyr) (with M-252)). Catalysis depends on His-99, which acts as the Proton acceptor. A cross-link (tryptophyl-tyrosyl-methioninium (Tyr-Met) (with W-98)) is located at residues 226–252 (YVNPEGVDGNPDPLKTAQDMRVTFARM). Heme b is bound at residue His-267.

Belongs to the peroxidase family. Peroxidase/catalase subfamily. As to quaternary structure, homodimer or homotetramer. Heme b serves as cofactor. In terms of processing, formation of the three residue Trp-Tyr-Met cross-link is important for the catalase, but not the peroxidase activity of the enzyme.

The enzyme catalyses H2O2 + AH2 = A + 2 H2O. The catalysed reaction is 2 H2O2 = O2 + 2 H2O. In terms of biological role, bifunctional enzyme with both catalase and broad-spectrum peroxidase activity. This Vibrio cholerae serotype O1 (strain ATCC 39315 / El Tor Inaba N16961) protein is Catalase-peroxidase.